Reading from the N-terminus, the 473-residue chain is ATP synthase subunit beta (473 aa).

158-165 provides a ligand contact to ATP; that stretch reads GGAGVGKT.

This sequence belongs to the ATPase alpha/beta chains family. F-type ATPases have 2 components, CF(1) - the catalytic core - and CF(0) - the membrane proton channel. CF(1) has five subunits: alpha(3), beta(3), gamma(1), delta(1), epsilon(1). CF(0) has three main subunits: a(1), b(2) and c(9-12). The alpha and beta chains form an alternating ring which encloses part of the gamma chain. CF(1) is attached to CF(0) by a central stalk formed by the gamma and epsilon chains, while a peripheral stalk is formed by the delta and b chains.

The protein localises to the cell membrane. The catalysed reaction is ATP + H2O + 4 H(+)(in) = ADP + phosphate + 5 H(+)(out). Produces ATP from ADP in the presence of a proton gradient across the membrane. The catalytic sites are hosted primarily by the beta subunits. This chain is ATP synthase subunit beta, found in Geobacillus sp. (strain WCH70).